Reading from the N-terminus, the 764-residue chain is A-type ATP synthase subunit A (764 aa).

Belongs to the ATPase alpha/beta chains family. As to quaternary structure, has multiple subunits with at least A(3), B(3), C, D, E, F, H, I and proteolipid K(x). In terms of processing, this protein undergoes a protein self splicing that involves a post-translational excision of the VDE intervening region (intein) followed by peptide ligation.

Its subcellular location is the cell membrane. It catalyses the reaction ATP + H2O + 4 H(+)(in) = ADP + phosphate + 5 H(+)(out). Component of the A-type ATP synthase that produces ATP from ADP in the presence of a proton gradient across the membrane. The A chain is the catalytic subunit. The polypeptide is A-type ATP synthase subunit A (Thermoplasma acidophilum (strain ATCC 25905 / DSM 1728 / JCM 9062 / NBRC 15155 / AMRC-C165)).